Reading from the N-terminus, the 119-residue chain is Ribonuclease P protein component (119 aa).

Positions 1–20 are disordered; it reads MLPAQHRMTRSTEFGATVSK.

The protein belongs to the RnpA family. In terms of assembly, consists of a catalytic RNA component (M1 or rnpB) and a protein subunit.

The enzyme catalyses Endonucleolytic cleavage of RNA, removing 5'-extranucleotides from tRNA precursor.. RNaseP catalyzes the removal of the 5'-leader sequence from pre-tRNA to produce the mature 5'-terminus. It can also cleave other RNA substrates such as 4.5S RNA. The protein component plays an auxiliary but essential role in vivo by binding to the 5'-leader sequence and broadening the substrate specificity of the ribozyme. The protein is Ribonuclease P protein component of Mycolicibacterium vanbaalenii (strain DSM 7251 / JCM 13017 / BCRC 16820 / KCTC 9966 / NRRL B-24157 / PYR-1) (Mycobacterium vanbaalenii).